Here is an 811-residue protein sequence, read N- to C-terminus: Glycerol-3-phosphate acyltransferase (811 aa).

Residues 309–314 carry the HXXXXD motif motif; the sequence is HRSHMD.

This sequence belongs to the GPAT/DAPAT family.

It is found in the cell inner membrane. The catalysed reaction is sn-glycerol 3-phosphate + an acyl-CoA = a 1-acyl-sn-glycero-3-phosphate + CoA. Its pathway is phospholipid metabolism; CDP-diacylglycerol biosynthesis; CDP-diacylglycerol from sn-glycerol 3-phosphate: step 1/3. The chain is Glycerol-3-phosphate acyltransferase (plsB) from Vibrio cholerae serotype O1 (strain ATCC 39315 / El Tor Inaba N16961).